The chain runs to 523 residues: Tyrosine/DOPA decarboxylase 5 (523 aa).

Positions 1–19 (MGSLPTDNLESMSICSQNP) are enriched in polar residues. Disordered regions lie at residues 1 to 20 (MGSLPTDNLESMSICSQNPL) and 47 to 66 (SRSQANPGSQQTLPETAPNH). Lys321 is subject to N6-(pyridoxal phosphate)lysine.

The protein belongs to the group II decarboxylase family. As to quaternary structure, homodimer. It depends on pyridoxal 5'-phosphate as a cofactor. As to expression, roots.

The catalysed reaction is L-tyrosine + H(+) = tyramine + CO2. It carries out the reaction L-dopa + H(+) = dopamine + CO2. The enzyme catalyses 5-hydroxy-L-tryptophan + H(+) = serotonin + CO2. In terms of biological role, may play an important role in providing precursors for alkaloid synthesis in the roots and germinating seedlings. The protein is Tyrosine/DOPA decarboxylase 5 (TYDC5) of Papaver somniferum (Opium poppy).